The sequence spans 22 residues: Alpha-amylase inhibitor DR4 (22 aa).

Residues 1 to 22 (SGGGKEAAETFNRVESHPRPDA) form a disordered region.

Inhibits insect alpha-amylases. In Delonix regia (Royal poinciana), this protein is Alpha-amylase inhibitor DR4.